Reading from the N-terminus, the 385-residue chain is MSEPAILVLADGSVFHGTSIGAKGHTVGEVVFNTAMTGYQEILTDPSYFRQIVTLTYPHIGNTGTNLEDCEANHVYASGLIIRDLPLLHSNFRSSMSLRDYLQTHNVVAIADIDTRRLTRILRDKGAQAGCIMTGEIDEAKALELAKSFGSMAGKDLAQEVSTGEIFTWTSGQWQLGKGFIEQTQAEFNVVAYDFGVKHNILRMLAERGCKITVVPAKTSAEQVLALNPDGIFLSNGPGDPEPCDYAISAIQTLLASKKPIFGICLGHQLLGLAAGGKTKKMAFGHHGANHPVQDLNTQKVFITSQNHGFEVDEASLPSHVRVTHRSLFDNSVQGIELSDQSAFSFQGHPEASPGPNDVAYLFDKFINEMRKANLSQLSTYVAHH.

The segment at 1–185 is CPSase; sequence MSEPAILVLA…LGKGFIEQTQ (185 aa). L-glutamine-binding residues include S47, G237, and G239. The Glutamine amidotransferase type-1 domain occupies 189–376; the sequence is NVVAYDFGVK…INEMRKANLS (188 aa). C265 functions as the Nucleophile in the catalytic mechanism. 5 residues coordinate L-glutamine: L266, Q269, N307, G309, and F310. Residues H349 and E351 contribute to the active site.

It belongs to the CarA family. In terms of assembly, composed of two chains; the small (or glutamine) chain promotes the hydrolysis of glutamine to ammonia, which is used by the large (or ammonia) chain to synthesize carbamoyl phosphate. Tetramer of heterodimers (alpha,beta)4.

The catalysed reaction is hydrogencarbonate + L-glutamine + 2 ATP + H2O = carbamoyl phosphate + L-glutamate + 2 ADP + phosphate + 2 H(+). The enzyme catalyses L-glutamine + H2O = L-glutamate + NH4(+). The protein operates within amino-acid biosynthesis; L-arginine biosynthesis; carbamoyl phosphate from bicarbonate: step 1/1. It functions in the pathway pyrimidine metabolism; UMP biosynthesis via de novo pathway; (S)-dihydroorotate from bicarbonate: step 1/3. Its function is as follows. Small subunit of the glutamine-dependent carbamoyl phosphate synthetase (CPSase). CPSase catalyzes the formation of carbamoyl phosphate from the ammonia moiety of glutamine, carbonate, and phosphate donated by ATP, constituting the first step of 2 biosynthetic pathways, one leading to arginine and/or urea and the other to pyrimidine nucleotides. The small subunit (glutamine amidotransferase) binds and cleaves glutamine to supply the large subunit with the substrate ammonia. This is Carbamoyl phosphate synthase small chain from Pasteurella multocida (strain Pm70).